Consider the following 262-residue polypeptide: MAVNTAEYIGHHLSFLSSGDGFWAVHLDTLFFSLVAGVLFLVVFSRVAKNATTGVPGKLQCLVEMVVEWVDGLVKDNFHGPRHMIAPLALTIFCWVFIMNAIDLVPVDFLPQLANMFGIHYLRAVPTADISATLGMSICVFGLILFYTVKSKGFNGLAKEYTLHPFNHWAFIPVNFILETVTLLAKPISLAFRLFGNMYAGELIFILIAVMYMADNFALQALGIPLHLVWAIFHILVITLQAFIFMMLTIVYLSIAYNKADH.

A run of 5 helical transmembrane segments spans residues 24–44 (AVHLDTLFFSLVAGVLFLVVF), 85–105 (IAPLALTIFCWVFIMNAIDLV), 129–149 (DISATLGMSICVFGLILFYTV), 194–214 (LFGNMYAGELIFILIAVMYMA), and 228–248 (LVWAIFHILVITLQAFIFMML).

The protein belongs to the ATPase A chain family. In terms of assembly, F-type ATPases have 2 components, CF(1) - the catalytic core - and CF(0) - the membrane proton channel. CF(1) has five subunits: alpha(3), beta(3), gamma(1), delta(1), epsilon(1). CF(0) has three main subunits: a(1), b(2) and c(9-12). The alpha and beta chains form an alternating ring which encloses part of the gamma chain. CF(1) is attached to CF(0) by a central stalk formed by the gamma and epsilon chains, while a peripheral stalk is formed by the delta and b chains.

It is found in the cell inner membrane. Its function is as follows. Key component of the proton channel; it plays a direct role in the translocation of protons across the membrane. The polypeptide is ATP synthase subunit a (Haemophilus ducreyi (strain 35000HP / ATCC 700724)).